The chain runs to 389 residues: MFDALARQADDPLLALIGLFRKDERPGKVDLGVGVYRDETGRTPIFRAVKAAEKRLLETQDSKAYIGPEGDLVFLDRLWELVGGDTIERSHVAGVQTPGGSGALRLAADLIARMGGRGIWLGLPSWPNHAPIFKAAGLDIATYDFFDIPSQSVIFDNLVSALEGAASGDAVLLHASCHNPTGGVLSEAQWMEIAALVAERGLLPLVDLAYQGFGRGLDQDVAGLRHLLGVVPEALVAVSCSKSFGLYRERAGAIFARTSSTASADRVRSNLAGLARTSYSMPPDHGAAVVRTILDDPELRRDWTEELETMRLRMTGLRRSLAEGLRTRWQSLGAVADQEGMFSMLPLSEAEVMRLRTEHGIYMPASGRINIAGLKTAEAAEIAGKFTSL.

At Lys242 the chain carries N6-(pyridoxal phosphate)lysine.

It belongs to the class-I pyridoxal-phosphate-dependent aminotransferase family. As to quaternary structure, homodimer. It depends on pyridoxal 5'-phosphate as a cofactor.

The enzyme catalyses L-tyrosine + 2-oxoglutarate = 3-(4-hydroxyphenyl)pyruvate + L-glutamate. It functions in the pathway amino-acid degradation; L-phenylalanine degradation; acetoacetate and fumarate from L-phenylalanine: step 2/6. Transaminase involved in tyrosine breakdown. Converts tyrosine to p-hydroxyphenylpyruvate. This is Tyrosine aminotransferase (tatA) from Rhizobium meliloti (strain 1021) (Ensifer meliloti).